The sequence spans 323 residues: tRNA dimethylallyltransferase (323 aa).

15-22 (GATGSGKT) is a binding site for ATP. 17–22 (TGSGKT) contributes to the substrate binding site. Interaction with substrate tRNA stretches follow at residues 40 to 43 (DSRQ) and 164 to 168 (QRLIR).

The protein belongs to the IPP transferase family. In terms of assembly, monomer. It depends on Mg(2+) as a cofactor.

The enzyme catalyses adenosine(37) in tRNA + dimethylallyl diphosphate = N(6)-dimethylallyladenosine(37) in tRNA + diphosphate. In terms of biological role, catalyzes the transfer of a dimethylallyl group onto the adenine at position 37 in tRNAs that read codons beginning with uridine, leading to the formation of N6-(dimethylallyl)adenosine (i(6)A). In Chloroherpeton thalassium (strain ATCC 35110 / GB-78), this protein is tRNA dimethylallyltransferase.